The following is a 339-amino-acid chain: MTIQKNWQELIRPNKLQVVPGSDPSRFATLIAEPLERGFGQTLGNALRRILLSSLQGAAVQSVHIDGVLHEFSSIAGVREDVTDIVLNIKDIAIRMQGEGPKRMVVKKQGPGTVTAGDIQTVGDVVVLNPDLQICTLDDGAEIRMEFTVASGKGYVAAERNRPEDAPIGLIPVDSLYSPVRKVSYKVENTREGQILDYDKLTMTIETNGGVTPEDAVAFAARILQDQLNVFVNFEEPRKEVTTEIIPDLAFNPAFLKKVDELELSVRSANCLKNDNIVYIGDLVQKSEAEMLRTPNFGRKSLNEIKEVLAQMGLHLGMEVPGWPPENIDELAKRFEDHY.

The interval 1-235 is alpha N-terminal domain (alpha-NTD); that stretch reads MTIQKNWQEL…DQLNVFVNFE (235 aa). The tract at residues 251–339 is alpha C-terminal domain (alpha-CTD); the sequence is FNPAFLKKVD…ELAKRFEDHY (89 aa).

This sequence belongs to the RNA polymerase alpha chain family. In terms of assembly, homodimer. The RNAP catalytic core consists of 2 alpha, 1 beta, 1 beta' and 1 omega subunit. When a sigma factor is associated with the core the holoenzyme is formed, which can initiate transcription.

The enzyme catalyses RNA(n) + a ribonucleoside 5'-triphosphate = RNA(n+1) + diphosphate. DNA-dependent RNA polymerase catalyzes the transcription of DNA into RNA using the four ribonucleoside triphosphates as substrates. This Nitrobacter winogradskyi (strain ATCC 25391 / DSM 10237 / CIP 104748 / NCIMB 11846 / Nb-255) protein is DNA-directed RNA polymerase subunit alpha.